Reading from the N-terminus, the 594-residue chain is MALKLFLFALLLCLPTSLSSTASKGKEKKSKFNPYRYTFIDKASTFSSSSSSSFSSNGQDSSYDYIVIGGGTAGCPLAATLSQNFSVLVLERGGVPFTNANVSFLRNFHIGLADISASSASQAFVSTDGVYNARARVLGGGSCINAGFYSRADAAFVKRAGWDPKLVKESYPWVEREIVHQPKLTLWQKALRDSLLEVGVRPFNGFTYDHVSGTKIGGTIFDRFGRRHTAAELLAYANPQKLRVLIYATVQKIVFDTSGTRPRVTGVIFKDEKGNQHQALLSNRKGSEVILSSGAIGSPQMLMLSGIGPKKELQRLKIPVVLENEHVGKGMADNPMNTILVPSKAPIEQSLIQTVGITKMGVYVEASTGFGQSPESIHTHYGIMSNKNELFSTIPAKQRRPEATQAYITRNKYQLHEAFNGSFILEKLAYPISRGHLSLVNTNVDDNPSVTFNYFKHPVDLQRCVEAIRLVSKVVTSNRFLNYTQCDKQNVHKMLSLSVKANINLRPKQLNDTKSMAQFCKDTVVTIWHYHGGCLVGKVVSPNRKVLGVDRLRVIDGSTFDESPGTNPQATMMMMGRYMGVKILRERLGNKAGV.

An N-terminal signal peptide occupies residues 1–19; it reads MALKLFLFALLLCLPTSLS. 64–91 lines the FAD pocket; that stretch reads DYIVIGGGTAGCPLAATLSQNFSVLVLE. Histidine 529 serves as the catalytic Proton acceptor.

It belongs to the GMC oxidoreductase family. The cofactor is FAD. In terms of tissue distribution, expressed in roots, leaves, stems, inflorescences and siliques. Found not only in epidermis but also in all sub-epidermal cell layers.

Its function is as follows. Probable FAD-dependent enzyme. Involved in regulating post-genital organ fusion. Required to limit cellular interactions between contacting epidermal cells during floral development. The sequence is that of Protein HOTHEAD (HTH) from Arabidopsis thaliana (Mouse-ear cress).